The sequence spans 259 residues: DNA terminal protein (259 aa).

Residue Y190 is modified to O-(5'-phospho-DNA)-tyrosine. The Nuclear localization signal motif lies at 243-259; sequence KKKYKRRQKRGYGSKGV.

This sequence belongs to the tectivirus DNA terminal protein family. In terms of assembly, heterodimer with viral polymerase. Binds to ssDNA.

Its subcellular location is the virion. It localises to the host nucleus. Acts as a primer for viral genomic replication. DNA terminal protein is covalently linked to the 5'-ends of both strands of the genome through a phosphodiester bond between the beta-hydroxyl group of a tyrosine residue and the 5'-phosphate of the terminal deoxyadenylate. This protein is essential for DNA replication and is involved in the priming of DNA elongation. This is DNA terminal protein (VIII) from Enterobacteria phage PRD1 (Bacteriophage PRD1).